The sequence spans 130 residues: MDEKEFKRLLRVRARLKRKKPRFLRQEWWRYPKFKNDPKWRRPKGIDSKMRLKLKGKPRSPSIGWSSPKLVRGLHPSGYEEVLVHNVKELEALDPKRQAARIAHTVGKKKRIEIIKRAEELGIKVLNPRV.

The protein belongs to the eukaryotic ribosomal protein eL32 family. As to quaternary structure, part of the 50S ribosomal subunit.

The chain is Large ribosomal subunit protein eL32 from Pyrococcus furiosus (strain ATCC 43587 / DSM 3638 / JCM 8422 / Vc1).